The chain runs to 345 residues: Holliday junction branch migration complex subunit RuvB (345 aa).

The tract at residues 1–182 (MQRLVEVESV…FGMHFRMQFY (182 aa)) is large ATPase domain (RuvB-L). ATP-binding positions include leucine 21, arginine 22, glycine 63, lysine 66, threonine 67, threonine 68, 129–131 (EDY), arginine 172, tyrosine 182, and arginine 219. Threonine 67 is a binding site for Mg(2+). Residues 183-253 (TEIELAKIIQ…RCKYALDELG (71 aa)) are small ATPAse domain (RuvB-S). The segment at 256–345 (ESGFDEMDIN…EDDLTQGKLF (90 aa)) is head domain (RuvB-H). Residues arginine 310 and arginine 315 each coordinate DNA.

This sequence belongs to the RuvB family. Homohexamer. Forms an RuvA(8)-RuvB(12)-Holliday junction (HJ) complex. HJ DNA is sandwiched between 2 RuvA tetramers; dsDNA enters through RuvA and exits via RuvB. An RuvB hexamer assembles on each DNA strand where it exits the tetramer. Each RuvB hexamer is contacted by two RuvA subunits (via domain III) on 2 adjacent RuvB subunits; this complex drives branch migration. In the full resolvosome a probable DNA-RuvA(4)-RuvB(12)-RuvC(2) complex forms which resolves the HJ.

It is found in the cytoplasm. The catalysed reaction is ATP + H2O = ADP + phosphate + H(+). The RuvA-RuvB-RuvC complex processes Holliday junction (HJ) DNA during genetic recombination and DNA repair, while the RuvA-RuvB complex plays an important role in the rescue of blocked DNA replication forks via replication fork reversal (RFR). RuvA specifically binds to HJ cruciform DNA, conferring on it an open structure. The RuvB hexamer acts as an ATP-dependent pump, pulling dsDNA into and through the RuvAB complex. RuvB forms 2 homohexamers on either side of HJ DNA bound by 1 or 2 RuvA tetramers; 4 subunits per hexamer contact DNA at a time. Coordinated motions by a converter formed by DNA-disengaged RuvB subunits stimulates ATP hydrolysis and nucleotide exchange. Immobilization of the converter enables RuvB to convert the ATP-contained energy into a lever motion, pulling 2 nucleotides of DNA out of the RuvA tetramer per ATP hydrolyzed, thus driving DNA branch migration. The RuvB motors rotate together with the DNA substrate, which together with the progressing nucleotide cycle form the mechanistic basis for DNA recombination by continuous HJ branch migration. Branch migration allows RuvC to scan DNA until it finds its consensus sequence, where it cleaves and resolves cruciform DNA. The chain is Holliday junction branch migration complex subunit RuvB from Aliarcobacter butzleri (strain RM4018) (Arcobacter butzleri).